A 335-amino-acid polypeptide reads, in one-letter code: MRN complex-interacting protein (335 aa).

Disordered stretches follow at residues 75-102 (EEAV…PSKP) and 118-194 (QELD…ALST). Ser-100 is modified (phosphoserine). Residues 129–142 (TQLSTSAERPSSPA) show a composition bias toward polar residues. The Nuclear localization signal (NLS) signature appears at 145-148 (RKRK). Residues 177–194 (STGLFGTEQQGTSPALST) show a composition bias toward polar residues. The tract at residues 203–230 (FPRWKLPSPVTQVNAPSSKWARFLLAPG) is necessary for the association with the MRN complex. A disordered region spans residues 273–335 (RPPQAIHTTT…TTGEDFDDDL (63 aa)). Residues 286-297 (DRPDRKTREQPR) are compositionally biased toward basic and acidic residues.

Belongs to the MRNIP family. In terms of assembly, associates with the MRE11-RAD50-NBN (MRN) damage-sensing complex; this association is constitutive. Interacts with MRE11. Interacts with NBN. Interacts with RAD50. Post-translationally, phosphorylated; phosphorylation is constitutive and occurs in the absence of any DNA-damaging stimulus. Phosphorylation is necessary for its nuclear retention.

The protein localises to the nucleus. Its subcellular location is the nucleoplasm. Its function is as follows. Plays a role in the cellular response to DNA damage and the maintenance of genome stability through its association with the MRN damage-sensing complex. Promotes chromatin loading and activity of the MRN complex to facilitate subsequent ATM-mediated DNA damage response signaling and DNA repair. This is MRN complex-interacting protein from Mus musculus (Mouse).